The sequence spans 245 residues: Geranylgeranylglyceryl phosphate synthase (245 aa).

Residues Asp22 and Ser51 each coordinate Mg(2+). Residues 169 to 175 (YLEAGSG), 200 to 201 (GG), and 222 to 223 (GT) each bind sn-glycerol 1-phosphate.

Belongs to the GGGP/HepGP synthase family. Group II subfamily. In terms of assembly, homotetramer. Homohexamer. It depends on Mg(2+) as a cofactor.

It is found in the cytoplasm. The enzyme catalyses sn-glycerol 1-phosphate + (2E,6E,10E)-geranylgeranyl diphosphate = sn-3-O-(geranylgeranyl)glycerol 1-phosphate + diphosphate. It participates in membrane lipid metabolism; glycerophospholipid metabolism. Prenyltransferase that catalyzes the transfer of the geranylgeranyl moiety of geranylgeranyl diphosphate (GGPP) to the C3 hydroxyl of sn-glycerol-1-phosphate (G1P). This reaction is the first ether-bond-formation step in the biosynthesis of archaeal membrane lipids. The chain is Geranylgeranylglyceryl phosphate synthase from Methanothermobacter thermautotrophicus (strain ATCC 29096 / DSM 1053 / JCM 10044 / NBRC 100330 / Delta H) (Methanobacterium thermoautotrophicum).